The sequence spans 156 residues: MPRKGHIAKRDVLPDPLYNSKVVTKLINSIMLDGKRGVAQKICYDAFEIIAEKSGKDAMEVFETAMNNIMPLLEVKARRIGGATYQVPIEVRPERRQTLGIRWMLIAARKRGERSMRERLAGELLDASNNTGAAVKKREDTHKMAEANKAFAHYRY.

It belongs to the universal ribosomal protein uS7 family. Part of the 30S ribosomal subunit. Contacts proteins S9 and S11.

In terms of biological role, one of the primary rRNA binding proteins, it binds directly to 16S rRNA where it nucleates assembly of the head domain of the 30S subunit. Is located at the subunit interface close to the decoding center, probably blocks exit of the E-site tRNA. The chain is Small ribosomal subunit protein uS7 from Clostridium botulinum (strain Kyoto / Type A2).